The sequence spans 569 residues: Cytosolic purine 5'-nucleotidase (569 aa).

Aspartate 52 (nucleophile) is an active-site residue. IMP contacts are provided by aspartate 52 and aspartate 54. Residues aspartate 52 and aspartate 54 each coordinate Mg(2+). Aspartate 54 functions as the Proton donor in the catalytic mechanism. The ATP site is built by arginine 144 and asparagine 154. Arginine 202, aspartate 206, lysine 215, threonine 249, asparagine 250, serine 251, and lysine 292 together coordinate IMP. Aspartate 351 contacts Mg(2+). ATP-binding residues include glutamine 453 and arginine 456. Residues 527-569 form a disordered region; sequence SISEIKPPNLFPQAPQEITHCHDEDDDEEEEEEEVEEEEEEEE. The tract at residues 548-569 is required for tetramer assembly; the sequence is HDEDDDEEEEEEEVEEEEEEEE. Residues 550–569 show a composition bias toward acidic residues; it reads EDDDEEEEEEEVEEEEEEEE.

Belongs to the 5'(3')-deoxyribonucleotidase family. Homotetramer. Mg(2+) serves as cofactor.

It localises to the cytoplasm. It is found in the cytosol. The enzyme catalyses a ribonucleoside 5'-phosphate + H2O = a ribonucleoside + phosphate. It carries out the reaction a 2'-deoxyribonucleoside + a ribonucleoside 5'-phosphate = a ribonucleoside + a 2'-deoxyribonucleoside 5'-phosphate. The catalysed reaction is IMP + H2O = inosine + phosphate. It catalyses the reaction GMP + H2O = guanosine + phosphate. The enzyme catalyses dGMP + H2O = 2'-deoxyguanosine + phosphate. It carries out the reaction dIMP + H2O = 2'-deoxyinosine + phosphate. The catalysed reaction is XMP + H2O = xanthosine + phosphate. It catalyses the reaction inosine + GMP = guanosine + IMP. The enzyme catalyses dGMP + inosine = 2'-deoxyguanosine + IMP. It carries out the reaction dIMP + inosine = 2'-deoxyinosine + IMP. The catalysed reaction is inosine + UMP = uridine + IMP. It catalyses the reaction inosine + CMP = cytidine + IMP. The enzyme catalyses inosine + AMP = IMP + adenosine. With respect to regulation, allosterically activated by various compounds including ATP, 2,3-BPG/2,3-Bisphosphoglyceric acid and Ap4A/P1,P4-bis(5'-adenosyl) tetraphosphate. Binding of an allosteric activator is a prerequisiste to magnesium and substrate binding. Inhibited by inorganic phosphate. Inhibited by inosine, guanosine, p-chloromercuribenzoate and NaF. Its function is as follows. Broad specificity cytosolic 5'-nucleotidase that catalyzes the dephosphorylation of 6-hydroxypurine nucleoside 5'-monophosphates. In addition, possesses a phosphotransferase activity by which it can transfer a phosphate from a donor nucleoside monophosphate to an acceptor nucleoside, preferably inosine, deoxyinosine and guanosine. Has the highest activities for IMP and GMP followed by dIMP, dGMP and XMP. Could also catalyze the transfer of phosphates from pyrimidine monophosphates but with lower efficiency. Through these activities regulates the purine nucleoside/nucleotide pools within the cell. The polypeptide is Cytosolic purine 5'-nucleotidase (NT5C2) (Gallus gallus (Chicken)).